The chain runs to 143 residues: Large ribosomal subunit protein uL11 (143 aa).

The protein belongs to the universal ribosomal protein uL11 family. Part of the ribosomal stalk of the 50S ribosomal subunit. Interacts with L10 and the large rRNA to form the base of the stalk. L10 forms an elongated spine to which L12 dimers bind in a sequential fashion forming a multimeric L10(L12)X complex. One or more lysine residues are methylated.

Its function is as follows. Forms part of the ribosomal stalk which helps the ribosome interact with GTP-bound translation factors. This is Large ribosomal subunit protein uL11 from Stutzerimonas stutzeri (strain A1501) (Pseudomonas stutzeri).